The following is a 303-amino-acid chain: N-acetyl-D-glucosamine kinase (303 aa).

ATP contacts are provided by residues 4 to 11 (GFDVGGTK) and 133 to 140 (GFGGGLIY). Residues His157, Cys177, Cys179, and Cys184 each coordinate Zn(2+).

It belongs to the ROK (NagC/XylR) family. NagK subfamily.

It carries out the reaction N-acetyl-D-glucosamine + ATP = N-acetyl-D-glucosamine 6-phosphate + ADP + H(+). Its pathway is cell wall biogenesis; peptidoglycan recycling. Functionally, catalyzes the phosphorylation of N-acetyl-D-glucosamine (GlcNAc) derived from cell-wall degradation, yielding GlcNAc-6-P. The chain is N-acetyl-D-glucosamine kinase from Vibrio vulnificus (strain CMCP6).